The chain runs to 210 residues: Dephospho-CoA kinase (210 aa).

The region spanning 4–201 is the DPCK domain; sequence IVALTGGICS…NFYIYLSKQN (198 aa). ATP is bound at residue 12-17; it reads CSGKTT.

Belongs to the CoaE family.

It localises to the cytoplasm. The enzyme catalyses 3'-dephospho-CoA + ATP = ADP + CoA + H(+). It participates in cofactor biosynthesis; coenzyme A biosynthesis; CoA from (R)-pantothenate: step 5/5. In terms of biological role, catalyzes the phosphorylation of the 3'-hydroxyl group of dephosphocoenzyme A to form coenzyme A. The sequence is that of Dephospho-CoA kinase from Buchnera aphidicola subsp. Schizaphis graminum (strain Sg).